The following is a 285-amino-acid chain: Kanamycin B dioxygenase (285 aa).

Belongs to the PhyH family. Fe cation is required as a cofactor.

The catalysed reaction is kanamycin B + 2-oxoglutarate + O2 = 2'-dehydrokanamycin A + succinate + NH4(+) + CO2. The protein operates within antibiotic biosynthesis; kanamycin biosynthesis. In terms of biological role, mediates the conversion of kanamycin B into 2'-dehydrokanamycin A during the transformation of kanamycin B to kanamycin A. The protein is Kanamycin B dioxygenase (kanJ) of Streptomyces kanamyceticus.